Reading from the N-terminus, the 156-residue chain is MSRRHRAEKREINPDPKFGDLVVTKFMNAIMLHGKKSVAESIVYGAFDAVQSKLKQEPVTVFHSALDNIAPHVEVRSRRVGGATYQVPVDVRPERRQALAIRWLIAAARKRNETTMVDRLCGELMDAANNRGSAVKKREDTHKMADANRAFSHYRW.

The protein belongs to the universal ribosomal protein uS7 family. As to quaternary structure, part of the 30S ribosomal subunit. Contacts proteins S9 and S11.

Functionally, one of the primary rRNA binding proteins, it binds directly to 16S rRNA where it nucleates assembly of the head domain of the 30S subunit. Is located at the subunit interface close to the decoding center, probably blocks exit of the E-site tRNA. In Sinorhizobium medicae (strain WSM419) (Ensifer medicae), this protein is Small ribosomal subunit protein uS7.